Here is a 90-residue protein sequence, read N- to C-terminus: Protein AF1q (90 aa).

The Nuclear export signal signature appears at 24–32; sequence LSELEGLGL. Ser-84 is subject to Phosphoserine.

It belongs to the MLLT11 family. In terms of assembly, interacts with HSPA8 and LAMP2 isoform A; the interaction may target MLLT11 for degradation via chaperone-mediated autophagy. Interacts with TCF7. In terms of processing, ubiquitinated, leading to degradation. As to expression, expressed in myoepithelial cells of normal breast tissue (at protein level). Highly expressed in thymus. Expressed in colon, small intestine, prostate and ovary. Not detected in peripheral blood lymphocytes and spleen.

The protein localises to the nucleus. Its subcellular location is the cytoplasm. It localises to the cytoskeleton. It is found in the microtubule organizing center. The protein resides in the centrosome. Its function is as follows. Cofactor for the transcription factor TCF7. Involved in regulation of lymphoid development by driving multipotent hematopoietic progenitor cells towards a T cell fate. This is Protein AF1q (MLLT11) from Homo sapiens (Human).